Here is a 284-residue protein sequence, read N- to C-terminus: RNase adapter protein RapZ (284 aa).

8–15 is a binding site for ATP; that stretch reads GRSGSGKS. GTP is bound at residue 56-59; the sequence is DVRN. An RNA-binding region spans residues 266-284; it reads RSRGKNVQSRHRTLEKRKT.

The protein belongs to the RapZ-like family. RapZ subfamily. Homotrimer.

Its function is as follows. Modulates the synthesis of GlmS, by affecting the processing and stability of the regulatory small RNA GlmZ. When glucosamine-6-phosphate (GlcN6P) concentrations are high in the cell, RapZ binds GlmZ and targets it to cleavage by RNase E. Consequently, GlmZ is inactivated and unable to activate GlmS synthesis. Under low GlcN6P concentrations, RapZ is sequestered and inactivated by an other regulatory small RNA, GlmY, preventing GlmZ degradation and leading to synthesis of GlmS. This chain is RNase adapter protein RapZ, found in Salmonella typhimurium (strain LT2 / SGSC1412 / ATCC 700720).